Reading from the N-terminus, the 67-residue chain is uncharacterized protein (67 aa).

This is an uncharacterized protein from Saccharolobus islandicus (Sulfolobus islandicus).